The chain runs to 327 residues: Spermidine/putrescine import ATP-binding protein PotA (327 aa).

An ABC transporter domain is found at 5-235; sequence IKVEAVEKHF…PKTLFVATFI (231 aa). 37-44 provides a ligand contact to ATP; the sequence is GPSGCGKT.

The protein belongs to the ABC transporter superfamily. Spermidine/putrescine importer (TC 3.A.1.11.1) family. In terms of assembly, the complex is composed of two ATP-binding proteins (PotA), two transmembrane proteins (PotB and PotC) and a solute-binding protein (PotD).

It localises to the cell membrane. It catalyses the reaction ATP + H2O + polyamine-[polyamine-binding protein]Side 1 = ADP + phosphate + polyamineSide 2 + [polyamine-binding protein]Side 1.. Its function is as follows. Part of the ABC transporter complex PotABCD involved in spermidine/putrescine import. Responsible for energy coupling to the transport system. The protein is Spermidine/putrescine import ATP-binding protein PotA of Bacillus cereus (strain ATCC 14579 / DSM 31 / CCUG 7414 / JCM 2152 / NBRC 15305 / NCIMB 9373 / NCTC 2599 / NRRL B-3711).